The chain runs to 155 residues: FUN14 domain-containing protein 1 (155 aa).

The Cytoplasmic portion of the chain corresponds to 1–47; it reads MASRNPPPQDYESDDESYEVLDLTEYARRHHWWNRVFGHSSGPMVEK. Residues Ser-13 and Ser-17 each carry the phosphoserine modification. The residue at position 18 (Tyr-18) is a Phosphotyrosine; by SRC. The short motif at 18 to 21 is the YXXL element; that stretch reads YEVL. The chain crosses the membrane as a helical span at residues 48–68; sequence YSVATQIVMGGVTGWCAGFLF. Topologically, residues 69-74 are mitochondrial intermembrane; the sequence is QKVGKL. A helical membrane pass occupies residues 75–95; that stretch reads AATAVGGGFLLLQVASHSGYV. The Cytoplasmic portion of the chain corresponds to 96-133; the sequence is QIDWKRVEKDVNKAKRQIKKRANKAAPEINNIIEEATD. Lys-119 is covalently cross-linked (Glycyl lysine isopeptide (Lys-Gly) (interchain with G-Cter in ubiquitin)). The helical transmembrane segment at 134-154 threads the bilayer; it reads FIKQNIVISSGFVGGFLLGLA. Position 155 (Ser-155) is a topological domain, mitochondrial intermembrane.

This sequence belongs to the FUN14 family. Interacts (via YXXL motif) with MAP1 LC3 family proteins MAP1LC3A, MAP1LC3B and GABARAP. Interacts with DNM1L/DPR1. Interacts with GPX4. Phosphorylation at Ser-13 by CK2 and at Tyr-18 by SRC inhibits activation of mitophagy. Following hypoxia, dephosphorylated at Tyr-18, leading to interaction with MAP1 LC3 family proteins and triggering mitophagy. Dephosphorylation is mediated by PGAM5. Phosphorylated by ULK1 at Ser-17 which enhances FUNDC1 binding to LC3. In terms of processing, ubiquitinated on Lys-119. Deubiquitinated by USP19; leading to hypoxia-induced DRP1 oligomerization and GTPase activity.

It is found in the mitochondrion outer membrane. Its function is as follows. Integral mitochondrial outer-membrane protein that mediates the formation of mitochondria-associated endoplasmic reticulum membranes (MAMs). In turn, mediates angiogenesis and neoangiogenesis through interference with intracellular Ca(2+) communication and regulation of the vascular endothelial growth factor receptor KDR/VEGFR2 expression at both mRNA and protein levels. Also acts as an activator of hypoxia-induced mitophagy, an important mechanism for mitochondrial quality and homeostasis, by interacting with and recruiting LC3 protein family to mitochondria. Mechanistically, recruits DRP1 at ER-mitochondria contact sites leading to DRP1 oligomerization and GTPase activity to facilitate mitochondrial fission during hypoxia. Additionally, plays a role in hepatic ferroptosis by interacting directly with glutathione peroxidase/GPX4 to facilitate its recruitment into mitochondria through TOM/TIM complex where it is degraded by mitophagy. This is FUN14 domain-containing protein 1 (Fundc1) from Mus musculus (Mouse).